Consider the following 1353-residue polypeptide: MSKSLAYPPRKWYRRVPFLSDKSSLTLLDSNGNRKITPEASASLWNWFFFSWLNPLIAIGYSRPHIQSELYLLPPSSDVSVYAGKLDGHIEGLRERVPEGGGKRRRFNFHSPSWRLARALNASVLVWFWVGGAMKLFADVATITSPLLVRAIIRFLQTSEQNRKAGLPEPSIGQGFGMAIGLALLLASGVMANVHGFYRSYTSGILLRSALIDSLFRRTSAFSPLERAKHNLETSRIISMISTDVSRIDFACGYFHATWTSVIQILICLGLTIASLGPAALTGFGLMAILVPSQNYIVKYLFLLRKRSMPFTDARLSAISEALASIRLVKVYAWESALLSKISFLRRSELKLLRSRLLLRAVNVALSFSVPTLAAVVSFVTYAALGNELDAAEVFSALTLFMLLRTPLLLLPVAFGAAADGANAIQRLAGAFDAPMPDHGLPIDGDIEAAVEVKDATVSYRVQDHSDEKSEKQTSSFQLTNLTVHINRGELFMIVGPVGAGKSTFLGSLVGETRLETGHAVLGSRAAYAPQQAWLKSGSIRENIVFGRPWNPDRYNSVLSACCLTQDLSTFPSGDETMIGENGISLSGGQRQRVALARTIYEPSPLLLLDDVFSALDAHVQSEVVQKVVLERDPGTTLVLVTHSLHLLRHADRICCLNEGRVEEMGSFAELMGKEGGQMRRVVEEFASKSSAEEEEVEDGDLKDGVPSTDGGDASQTTSNKAMMQTEERFIGSVTARTYASYIRAGKPAFTLTFFILSMLIFQGGSILSPLWLQWWQEGRFPTLSSGTYMGVYAALGVSQAIGLLAMSSIFGFFIFYSACQIHADAIRSVLYAPISFFDTTPLGRITHRFSKDIDAIDNVIGEAFRMLLSTVAQVVGAVVLISIILPWFLLAVFVIVILYILTGMYYRPTARELRRLDALTRSPIYEHVSESLNGIMVIRSLGALQTTLDRNRENLNTENSPYWLSVACQRWLSVRLDLLGTCLVLLVGLIVVGSRSSISAAQGGVALSYIVTVQAVFGFMIRQSAEIENNMNAIERLLYYSHDVPQEPPHKREGDVGLVEKKWPGQGAIEMRDVVFTHREGLEPSLRGVNLVIPAGCRLALVGRTGSGKSTMLAALVGMGEITAGTIMVDGVDVSTIGLNLLRKRIAFMPQEAAVLSGTLRYNLDPFGEHDDADLWRVMHQVGLSSISAQSSAETLTSSDQEKSSPDDAAISPSSHSHSQHLTLDTPIHAERSDLSSGQRSLISLARALIKDASIFVLDEATASMDMELDHRLQRVLRENLRGKTTIVIAHRLDSVVGSSDLICVMDEGRVAQCGSPMDLFGEEGGHFRSLCSDAGLGELDLVEARRRFVSS.

A helical transmembrane segment spans residues 40–60 (ASASLWNWFFFSWLNPLIAIG). N121 carries an N-linked (GlcNAc...) asparagine glycan. The next 6 membrane-spanning stretches (helical) occupy residues 124-144 (VLVW…ATIT), 172-192 (IGQG…GVMA), 250-270 (FACG…ICLG), 271-291 (LTIA…AILV), 364-384 (VALS…TYAA), and 397-417 (ALTL…AFGA). The region spanning 129 to 420 (WVGGAMKLFA…LPVAFGAAAD (292 aa)) is the ABC transmembrane type-1 1 domain. The region spanning 460–684 (YRVQDHSDEK…EGGQMRRVVE (225 aa)) is the ABC transporter 1 domain. N-linked (GlcNAc...) asparagine glycosylation occurs at N481. ATP is bound at residue 496–503 (GPVGAGKS). Residues 687–720 (ASKSSAEEEEVEDGDLKDGVPSTDGGDASQTTSN) form a disordered region. 6 helical membrane-spanning segments follow: residues 748–768 (PAFT…GSIL), 796–816 (LGVS…FFIF), 864–882 (AFRM…VVLI), 888–907 (WFLL…GMYY), 973–993 (LSVR…LIVV), and 1002–1022 (AQGG…GFMI). Residues 756–1030 (ILSMLIFQGG…MIRQSAEIEN (275 aa)) enclose the ABC transmembrane type-1 2 domain. The ABC transporter 2 domain occupies 1070 to 1334 (IEMRDVVFTH…EGGHFRSLCS (265 aa)). 1104-1111 (GRTGSGKS) is an ATP binding site. Residues 1191 to 1200 (QSSAETLTSS) are compositionally biased toward polar residues. The disordered stretch occupies residues 1191–1223 (QSSAETLTSSDQEKSSPDDAAISPSSHSHSQHL). The segment covering 1208 to 1218 (DDAAISPSSHS) has biased composition (low complexity).

It belongs to the ABC transporter superfamily. ABCC family. Conjugate transporter (TC 3.A.1.208) subfamily.

It localises to the cell membrane. Multidrug resistance protein; part of the gene cluster 14 that mediates the biosynthesis of a ferrichrome A-like siderophors which may contribute to organismal virulence. This is ABC-type transporter MYCGRDRAFT_41235 from Zymoseptoria tritici (strain CBS 115943 / IPO323) (Speckled leaf blotch fungus).